A 424-amino-acid chain; its full sequence is Serine incorporator 5 (424 aa).

At 1-6 (MYALYF) the chain is on the extracellular side. A helical transmembrane segment spans residues 7–23 (ILVVVLCCIMMSTTVAH). At 24–52 (KMKEHIPFFEDMCKGIKAGDTCEKLVGYS) the chain is on the cytoplasmic side. Residues 53–73 (AVYRVCFGMACFFFIFCLLTL) traverse the membrane as a helical segment. At 74–87 (KINNSKSCRAHIHN) the chain is on the extracellular side. A glycan (N-linked (GlcNAc...) asparagine) is linked at Asn-76. Residues 88–108 (GFWFFKLLLLGAMCSGAFFIP) traverse the membrane as a helical segment. The Cytoplasmic portion of the chain corresponds to 109 to 119 (DQDTFLNAWRY). A helical membrane pass occupies residues 120 to 140 (VGAVGGFLFIGIQLLLLVEFA). The Extracellular segment spans residues 141–161 (HKWNKNWTAGTASNKLWYASL). Asn-146 is a glycosylation site (N-linked (GlcNAc...) asparagine). A helical membrane pass occupies residues 162-182 (ALVTLIMYSIATGGLVLMAVF). Topologically, residues 183-193 (YTQKDGCMENK) are cytoplasmic. Residues 194-214 (ILLGVNGGLCVLISLVAISPC) traverse the membrane as a helical segment. Topologically, residues 215 to 221 (VQNRQPH) are extracellular. Residues 222-242 (SGLLQSGVISCYVTYLTFSAL) traverse the membrane as a helical segment. Residues 243–274 (SSKPAEVVLDEHGKNVTICVPDFGQDLYRDEN) are Cytoplasmic-facing. The helical transmembrane segment at 275 to 295 (LVTILGTSLLIGCILYSCLTS) threads the bilayer. Residues 296 to 348 (TTRSSSDALQGRYAAPELEIARCCFCFSPGGEDTEEQQQGKEGPRVIYDEKKG) lie on the Extracellular side of the membrane. A helical membrane pass occupies residues 349-369 (TVYIYSYFHFVFFLASLYVMM). At 370–391 (TVTNWFNYESANIESFFSGSWS) the chain is on the cytoplasmic side. A helical membrane pass occupies residues 392-412 (IFWVKMASCWICVLLYLCTLV). Residues 413–424 (APLCCPTREFSV) are Extracellular-facing.

Belongs to the TDE1 family.

It is found in the cell membrane. It catalyses the reaction a 1,2-diacyl-sn-glycero-3-phospho-L-serine(in) = a 1,2-diacyl-sn-glycero-3-phospho-L-serine(out). The enzyme catalyses a 1,2-diacyl-sn-glycero-3-phosphocholine(in) = a 1,2-diacyl-sn-glycero-3-phosphocholine(out). The catalysed reaction is a 1,2-diacyl-sn-glycero-3-phosphoethanolamine(in) = a 1,2-diacyl-sn-glycero-3-phosphoethanolamine(out). Restriction factor required to restrict infectivity of gammaretroviruses: acts by inhibiting an early step of viral infection. Impairs the penetration of the viral particle into the cytoplasm. Non-ATP-dependent, non-specific lipid transporter for phosphatidylserine, phosphatidylcholine, and phosphatidylethanolamine. Functions as a scramblase that flips lipids in both directions across the membrane. Phospholipid scrambling results in gammaretroviral surface exposure of phosphatidylserine and loss of membrane asymmetry, which leads to loss of infectivity. Enhances the incorporation of serine into phosphatidylserine and sphingolipids. May play a role in providing serine molecules for the formation of myelin glycosphingolipids in oligodendrocytes. This chain is Serine incorporator 5 (SERINC5), found in Macaca fascicularis (Crab-eating macaque).